We begin with the raw amino-acid sequence, 520 residues long: MAGPVLTLGLLAALVVCALPGSWGLNEEQRLIQHLFNEKGYDKDLRPVARKEDKVDVALSLTLSNLISLKEVEETLTTNVWIDHAWVDSRLQWDANDFGNITVLRLPPDMVWLPEIVLENNNDGSFQISYACNVLVYDSGYVTWLPPAIFRSSCPISVTYFPFDWQNCSLKFSSLKYTAKEITLSLKQEEENNRSYPIEWIIIDPEGFTENGEWEIVHRAAKLNVDPSVPMDSTNHQDVTFYLIIRRKPLFYIINILVPCVLISFMINLVFYLPGDCGEKTSVAISVLLAQSVFLLLISKRLPATSMAIPLVGKFLLFGMVLVTMVVVICVIVLNIHFRTPSTHVLSEGVKKFFLETLPKLLHMSRPAEEDPGPRALIRRSSSLGYICKAEEYFSLKSRSDLMFEKQSERHGLARRLTTARRPPASSEQVQQELFNEMKPAVDGANFIVNHMRDQNSYNEEKDNWNQVARTVDRLCLFVVTPVMVVGTAWIFLQGVYNQPPLQPFPGDPFSYSEQDKRFI.

An N-terminal signal peptide occupies residues 1 to 24 (MAGPVLTLGLLAALVVCALPGSWG). The Extracellular portion of the chain corresponds to 25 to 248 (LNEEQRLIQH…VTFYLIIRRK (224 aa)). Residues Asn-100, Asn-167, and Asn-193 are each glycosylated (N-linked (GlcNAc...) asparagine). Cysteines 154 and 168 form a disulfide. The next 3 membrane-spanning stretches (helical) occupy residues 249–273 (PLFYIINILVPCVLISFMINLVFYL), 281–299 (TSVAISVLLAQSVFLLLIS), and 315–336 (FLLFGMVLVTMVVVICVIVLNI). Over 337–474 (HFRTPSTHVL…WNQVARTVDR (138 aa)) the chain is Cytoplasmic. At Tyr-393 the chain carries Phosphotyrosine; by Tyr-kinases. A helical membrane pass occupies residues 475 to 493 (LCLFVVTPVMVVGTAWIFL).

The protein belongs to the ligand-gated ion channel (TC 1.A.9) family. Acetylcholine receptor (TC 1.A.9.1) subfamily. Delta/CHRND sub-subfamily. In terms of assembly, pentamer of two alpha chains, and one each of the beta, delta, and gamma (in immature muscle) or epsilon (in mature muscle) chains. The muscle heteropentamer composed of alpha-1, beta-1, delta, epsilon subunits interacts with the alpha-conotoxin ImII.

It localises to the postsynaptic cell membrane. Its subcellular location is the cell membrane. The enzyme catalyses K(+)(in) = K(+)(out). The catalysed reaction is Na(+)(in) = Na(+)(out). In terms of biological role, after binding acetylcholine, the AChR responds by an extensive change in conformation that affects all subunits and leads to opening of an ion-conducting channel across the plasma membrane. In Mus musculus (Mouse), this protein is Acetylcholine receptor subunit delta (Chrnd).